The chain runs to 267 residues: Acyl-[acyl-carrier-protein]--UDP-N-acetylglucosamine O-acyltransferase (267 aa).

It belongs to the transferase hexapeptide repeat family. LpxA subfamily. As to quaternary structure, homotrimer.

Its subcellular location is the cytoplasm. It carries out the reaction a (3R)-hydroxyacyl-[ACP] + UDP-N-acetyl-alpha-D-glucosamine = a UDP-3-O-[(3R)-3-hydroxyacyl]-N-acetyl-alpha-D-glucosamine + holo-[ACP]. The protein operates within glycolipid biosynthesis; lipid IV(A) biosynthesis; lipid IV(A) from (3R)-3-hydroxytetradecanoyl-[acyl-carrier-protein] and UDP-N-acetyl-alpha-D-glucosamine: step 1/6. Its function is as follows. Involved in the biosynthesis of lipid A, a phosphorylated glycolipid that anchors the lipopolysaccharide to the outer membrane of the cell. The chain is Acyl-[acyl-carrier-protein]--UDP-N-acetylglucosamine O-acyltransferase from Hamiltonella defensa subsp. Acyrthosiphon pisum (strain 5AT).